The following is a 202-amino-acid chain: Na(+)-translocating NADH-quinone reductase subunit E (202 aa).

The next 6 membrane-spanning stretches (helical) occupy residues 11–31, 39–59, 79–99, 114–134, 144–164, and 180–200; these read SIFLENMALFYFLGMCTFLAV, MGLGVAVIVVLTISVPVNQLV, LSFLSFLTFIGVIAALVQILE, GIFLPLITVNCAIFGGVAFAV, IFYGAGSGAGWALAITLLAAV, and LGSVFMIAGLMALGFQSFSGV.

This sequence belongs to the NqrDE/RnfAE family. As to quaternary structure, composed of six subunits; NqrA, NqrB, NqrC, NqrD, NqrE and NqrF.

Its subcellular location is the cell inner membrane. The enzyme catalyses a ubiquinone + n Na(+)(in) + NADH + H(+) = a ubiquinol + n Na(+)(out) + NAD(+). Functionally, NQR complex catalyzes the reduction of ubiquinone-1 to ubiquinol by two successive reactions, coupled with the transport of Na(+) ions from the cytoplasm to the periplasm. NqrA to NqrE are probably involved in the second step, the conversion of ubisemiquinone to ubiquinol. This is Na(+)-translocating NADH-quinone reductase subunit E from Pseudoalteromonas atlantica (strain T6c / ATCC BAA-1087).